A 255-amino-acid chain; its full sequence is Thiazole synthase (255 aa).

Residue lysine 96 is the Schiff-base intermediate with DXP of the active site. Residues glycine 157, 183-184, and 205-206 each bind 1-deoxy-D-xylulose 5-phosphate; these read AG and NS.

The protein belongs to the ThiG family. Homotetramer. Forms heterodimers with either ThiH or ThiS.

Its subcellular location is the cytoplasm. The enzyme catalyses [ThiS sulfur-carrier protein]-C-terminal-Gly-aminoethanethioate + 2-iminoacetate + 1-deoxy-D-xylulose 5-phosphate = [ThiS sulfur-carrier protein]-C-terminal Gly-Gly + 2-[(2R,5Z)-2-carboxy-4-methylthiazol-5(2H)-ylidene]ethyl phosphate + 2 H2O + H(+). It functions in the pathway cofactor biosynthesis; thiamine diphosphate biosynthesis. Catalyzes the rearrangement of 1-deoxy-D-xylulose 5-phosphate (DXP) to produce the thiazole phosphate moiety of thiamine. Sulfur is provided by the thiocarboxylate moiety of the carrier protein ThiS. In vitro, sulfur can be provided by H(2)S. The sequence is that of Thiazole synthase from Exiguobacterium sibiricum (strain DSM 17290 / CCUG 55495 / CIP 109462 / JCM 13490 / 255-15).